Reading from the N-terminus, the 1014-residue chain is MICAL-like protein 2 (1014 aa).

Positions 1–107 (MAAIKALQEW…YVSQYYNYFH (107 aa)) constitute a Calponin-homology (CH) domain. The tract at residues 1–261 (MAAIKALQEW…KLSNLASRQP (261 aa)) is forms an intramolecular interaction with the C-terminal coiled coil domain keeping the protein in a closed conformation. Phosphoserine occurs at positions 110, 144, and 154. The interval 114 to 181 (GMAGMKRPSS…PSPKAAPGTV (68 aa)) is disordered. The LIM zinc-binding domain occupies 187–249 (SICGVCGKHV…THHSSEAVSV (63 aa)). Residue Ser-250 is modified to Phosphoserine. Residues 262-394 (GGGIADTRPI…QGQAASKGVK (133 aa)) form a necessary and sufficient for interaction with actinins region. Positions 262–810 (GGGIADTRPI…QDDQTRSCKE (549 aa)) are mediates targeting to the cell plasma membrane. Disordered regions lie at residues 311 to 450 (LTPP…SRVP) and 609 to 780 (TLPK…RRKK). A compositionally biased stretch (polar residues) spans 332 to 355 (STVTTTSANSKATTHVTNSSPVGW). A compositionally biased stretch (low complexity) spans 356 to 368 (SSSAQSSTGTSGS). Residues 384-398 (PQGQAASKGVKTQLN) are compositionally biased toward polar residues. Composition is skewed to low complexity over residues 399–419 (SSTD…SSRT) and 438–447 (PASSSSSHAS). Polar residues-rich tracts occupy residues 624–633 (LSHSTTQAFS) and 646–656 (VGSTSWTSVSL). Composition is skewed to basic and acidic residues over residues 701–711 (EGWRARLKPVD) and 720–737 (LEQK…DTPR). Positions 747–758 (IHITLTPIQQKR) are enriched in polar residues. Position 759 is a phosphothreonine (Thr-759). 2 positions are modified to phosphoserine: Ser-773 and Ser-837. The interval 811–918 (KTATWGTRES…LMYKSKDQCL (108 aa)) is forms an intramolecular interaction with the N-terminal Calponin-homology and LIM zinc-binding domains-containing region keeping the protein in a closed conformation. The bMERB domain maps to 838–985 (PVRLHPNYIS…EQEEDQMLES (148 aa)). A coiled-coil region spans residues 845–885 (YISQEELQRQLQDIERQLDALELRGVELEKRLRAAEGDASE). The mediates interaction with RAB13 and is required for transition from the closed to the open conformation stretch occupies residues 918-1014 (LEERQLDLQG…WSSKSKSGQT (97 aa)).

In terms of assembly, interacts with RAB13 (GTP-bound form); competes with RAB8A and is involved in tight junctions assembly. Interacts with RAB8A; competes with RAB13 and is involved in E-cadherin endocytic recycling. Interacts with RAB8B. Interacts (preferentially in opened conformation) with ACTN1 and ACTN4; stimulated by RAB13 activation. Interacts (via calponin-homology (CH) domain) with the filamins FLNA, FLNB and FLNC (via actin-binding domain).

It localises to the cell membrane. The protein localises to the cell junction. The protein resides in the tight junction. It is found in the recycling endosome. Its subcellular location is the cell projection. It localises to the neuron projection. The protein localises to the cytoplasm. The protein resides in the cytoskeleton. Functionally, effector of small Rab GTPases which is involved in junctional complexes assembly through the regulation of cell adhesion molecules transport to the plasma membrane and actin cytoskeleton reorganization. Regulates the endocytic recycling of occludins, claudins and E-cadherin to the plasma membrane and may thereby regulate the establishment of tight junctions and adherens junctions. In parallel, may regulate actin cytoskeleton reorganization directly through interaction with F-actin or indirectly through actinins and filamins. Most probably involved in the processes of epithelial cell differentiation, cell spreading and neurite outgrowth. Undergoes liquid-liquid phase separation to form tubular recycling endosomes. Plays 2 sequential roles in the biogenesis of tubular recycling endosomes: first organizes phase separation and then the closed form formed by interaction with RAB8A promotes endosomal tubulation. The sequence is that of MICAL-like protein 2 (Micall2) from Rattus norvegicus (Rat).